The primary structure comprises 235 residues: Segregation and condensation protein A (235 aa).

Belongs to the ScpA family. Component of a cohesin-like complex composed of ScpA, ScpB and the Smc homodimer, in which ScpA and ScpB bind to the head domain of Smc. The presence of the three proteins is required for the association of the complex with DNA.

The protein localises to the cytoplasm. In terms of biological role, participates in chromosomal partition during cell division. May act via the formation of a condensin-like complex containing Smc and ScpB that pull DNA away from mid-cell into both cell halves. The polypeptide is Segregation and condensation protein A (Streptococcus agalactiae serotype Ia (strain ATCC 27591 / A909 / CDC SS700)).